The chain runs to 629 residues: Phosphomethylpyrimidine synthase (629 aa).

Substrate contacts are provided by residues asparagine 215, methionine 244, tyrosine 273, histidine 309, 329 to 331 (SRG), 370 to 373 (DGLR), and glutamate 409. Zn(2+) is bound at residue histidine 413. Tyrosine 436 is a binding site for substrate. Histidine 477 is a Zn(2+) binding site. [4Fe-4S] cluster contacts are provided by cysteine 557, cysteine 560, and cysteine 565. The segment at 589-610 (ENIKRETSAEEAEEAREGMSDM) is disordered.

It belongs to the ThiC family. In terms of assembly, homodimer. The cofactor is [4Fe-4S] cluster.

The catalysed reaction is 5-amino-1-(5-phospho-beta-D-ribosyl)imidazole + S-adenosyl-L-methionine = 4-amino-2-methyl-5-(phosphooxymethyl)pyrimidine + CO + 5'-deoxyadenosine + formate + L-methionine + 3 H(+). It functions in the pathway cofactor biosynthesis; thiamine diphosphate biosynthesis. Its function is as follows. Catalyzes the synthesis of the hydroxymethylpyrimidine phosphate (HMP-P) moiety of thiamine from aminoimidazole ribotide (AIR) in a radical S-adenosyl-L-methionine (SAM)-dependent reaction. The polypeptide is Phosphomethylpyrimidine synthase (Erythrobacter litoralis (strain HTCC2594)).